We begin with the raw amino-acid sequence, 374 residues long: Cyclin-D (374 aa).

It belongs to the cyclin family. Cyclin D subfamily.

The sequence is that of Cyclin-D (CycD) from Ostreococcus tauri.